A 267-amino-acid polypeptide reads, in one-letter code: MASSEETPRSLTGKVALVTGAGRGIGKGIALELAKRGASVVVNYNSAEKPAQEVVDEIAKTGSRAVAIKADITKVPEVSRLFQEALRHFGHLDIVVSNSGTEVFKPEEEVTEEDYDRVFNLNTRAQFFIAQHAYVHLRNGGRIVLMSSVAANMSGIPNHALYAGSKAAVEGFTRSFAVDAGHKKITVNAIAPGGVKTDMYDANAWHYVPNGKPGMPMEEIDKGLAAFCPLGRVAVPQDIGRVVAFLAHPDSEWVNGQVILLTGGSVT.

NADP(+) is bound by residues I25, N45, D71, and N98. Residues S147 and S148 each act as proton donor in the active site. NADP(+) contacts are provided by Y162, K166, V195, and T197. Y162 functions as the Proton acceptor in the catalytic mechanism. The Lowers pKa of active site Tyr role is filled by K166.

This sequence belongs to the short-chain dehydrogenases/reductases (SDR) family.

In terms of biological role, hydroxynaphthalene reductase-like protein; part of the Pks2 gene cluster that mediates the formation of infectious structures (appressoria), enabling these fungi to kill insects faster. The product of the Pks2 gene cluster is different from the one of Pks1 and has still not been identified. The chain is Hydroxynaphthalene reductase-like protein Arp2 from Metarhizium robertsii (strain ARSEF 23 / ATCC MYA-3075) (Metarhizium anisopliae (strain ARSEF 23)).